The following is a 213-amino-acid chain: 2-dehydro-3-deoxy-phosphogluconate aldolase (213 aa).

Glu-45 acts as the Proton acceptor in catalysis. The pyruvate site is built by Arg-49, Thr-73, and Lys-133. Lys-133 acts as the Schiff-base intermediate with substrate in catalysis.

Belongs to the KHG/KDPG aldolase family. As to quaternary structure, homotrimer.

The protein localises to the cytoplasm. The enzyme catalyses 2-dehydro-3-deoxy-6-phospho-D-gluconate = D-glyceraldehyde 3-phosphate + pyruvate. It functions in the pathway carbohydrate acid metabolism; 2-dehydro-3-deoxy-D-gluconate degradation; D-glyceraldehyde 3-phosphate and pyruvate from 2-dehydro-3-deoxy-D-gluconate: step 2/2. Involved in the degradation of glucose via the Entner-Doudoroff pathway. Catalyzes the reversible, stereospecific retro-aldol cleavage of 2-keto-3-deoxy-6-phosphogluconate (KDPG) to pyruvate and D-glyceraldehyde-3-phosphate. In Dickeya dadantii (strain 3937) (Erwinia chrysanthemi (strain 3937)), this protein is 2-dehydro-3-deoxy-phosphogluconate aldolase (eda).